Here is a 179-residue protein sequence, read N- to C-terminus: Sec-independent protein translocase protein TatB (179 aa).

A helical membrane pass occupies residues 2-22 (FNGVGWGEVVVLLLIGLFVFG). Residues 98–109 (LLGDDPPAAPSL) show a composition bias toward low complexity. Residues 98-179 (LLGDDPPAAP…TEVPFDSDAT (82 aa)) are disordered.

The protein belongs to the TatB family. In terms of assembly, the Tat system comprises two distinct complexes: a TatABC complex, containing multiple copies of TatA, TatB and TatC subunits, and a separate TatA complex, containing only TatA subunits. Substrates initially bind to the TatABC complex, which probably triggers association of the separate TatA complex to form the active translocon.

The protein localises to the cell membrane. Part of the twin-arginine translocation (Tat) system that transports large folded proteins containing a characteristic twin-arginine motif in their signal peptide across membranes. Together with TatC, TatB is part of a receptor directly interacting with Tat signal peptides. TatB may form an oligomeric binding site that transiently accommodates folded Tat precursor proteins before their translocation. In Frankia casuarinae (strain DSM 45818 / CECT 9043 / HFP020203 / CcI3), this protein is Sec-independent protein translocase protein TatB.